Reading from the N-terminus, the 429-residue chain is Bifunctional protein GlmU (429 aa).

The interval 1-223 (MKISVLILAA…EQDFMGVNDK (223 aa)) is pyrophosphorylase. Residues 8-11 (LAAG), lysine 22, glutamine 74, and 81-82 (GT) each bind UDP-N-acetyl-alpha-D-glucosamine. Residue aspartate 102 coordinates Mg(2+). Glycine 135, glutamate 149, asparagine 164, and asparagine 221 together coordinate UDP-N-acetyl-alpha-D-glucosamine. Mg(2+) is bound at residue asparagine 221. Positions 224–244 (IELCLAQDLMQEAIKKEWMKQ) are linker. An N-acetyltransferase region spans residues 245 to 429 (GVIFHMPATT…KDYFYTKFKK (185 aa)). The UDP-N-acetyl-alpha-D-glucosamine site is built by arginine 308 and lysine 325. The Proton acceptor role is filled by histidine 336. Residues tyrosine 339 and asparagine 350 each contribute to the UDP-N-acetyl-alpha-D-glucosamine site. Residues 359–360 (NY), serine 378, alanine 396, and arginine 413 each bind acetyl-CoA.

In the N-terminal section; belongs to the N-acetylglucosamine-1-phosphate uridyltransferase family. The protein in the C-terminal section; belongs to the transferase hexapeptide repeat family. Homotrimer. It depends on Mg(2+) as a cofactor.

The protein localises to the cytoplasm. The enzyme catalyses alpha-D-glucosamine 1-phosphate + acetyl-CoA = N-acetyl-alpha-D-glucosamine 1-phosphate + CoA + H(+). It catalyses the reaction N-acetyl-alpha-D-glucosamine 1-phosphate + UTP + H(+) = UDP-N-acetyl-alpha-D-glucosamine + diphosphate. Its pathway is nucleotide-sugar biosynthesis; UDP-N-acetyl-alpha-D-glucosamine biosynthesis; N-acetyl-alpha-D-glucosamine 1-phosphate from alpha-D-glucosamine 6-phosphate (route II): step 2/2. It functions in the pathway nucleotide-sugar biosynthesis; UDP-N-acetyl-alpha-D-glucosamine biosynthesis; UDP-N-acetyl-alpha-D-glucosamine from N-acetyl-alpha-D-glucosamine 1-phosphate: step 1/1. It participates in bacterial outer membrane biogenesis; LPS lipid A biosynthesis. Functionally, catalyzes the last two sequential reactions in the de novo biosynthetic pathway for UDP-N-acetylglucosamine (UDP-GlcNAc). The C-terminal domain catalyzes the transfer of acetyl group from acetyl coenzyme A to glucosamine-1-phosphate (GlcN-1-P) to produce N-acetylglucosamine-1-phosphate (GlcNAc-1-P), which is converted into UDP-GlcNAc by the transfer of uridine 5-monophosphate (from uridine 5-triphosphate), a reaction catalyzed by the N-terminal domain. The polypeptide is Bifunctional protein GlmU (Campylobacter lari (strain RM2100 / D67 / ATCC BAA-1060)).